The following is an 895-amino-acid chain: Glutamate receptor 2.3 (895 aa).

The first 23 residues, 1 to 23 (MRTEKLFFCILLVFFFCLEFNRG), serve as a signal peptide directing secretion. Residues 24–582 (QNNGKTLVDV…ILFMKPLSWK (559 aa)) are Extracellular-facing. 7 N-linked (GlcNAc...) asparagine glycosylation sites follow: Asn-52, Asn-203, Asn-266, Asn-330, Asn-342, Asn-477, and Asn-542. The chain crosses the membrane as a helical span at residues 583–603 (LWLTSFISFFLVGCTVWVLEY). The Cytoplasmic segment spans residues 604–610 (KRNPDFS). Residues 611 to 631 (GPPRFQASTICWFAFSTMVFA) traverse the membrane as a helical segment. Residues 632–635 (PRER) lie on the Cytoplasmic side of the membrane. A helical transmembrane segment spans residues 636–656 (VFSFWARALVIAWYFLVLVLT). Over 657 to 830 (QSYTASLASL…FTSRQLDIDS (174 aa)) the chain is Extracellular. A helical membrane pass occupies residues 831–851 (FLFLFVGVLLVCVMALGNFTY). At 852 to 895 (CFLAKDQVSYLDKVEMSPCSSSQQMPVKRKTQLNMSQVHDQDSL) the chain is on the cytoplasmic side. The interval 873–895 (SQQMPVKRKTQLNMSQVHDQDSL) is disordered.

It belongs to the glutamate-gated ion channel (TC 1.A.10.1) family. As to quaternary structure, may form heteromers. Expressed predominantly in roots.

Its subcellular location is the membrane. Functionally, glutamate-gated receptor that probably acts as a non-selective cation channel. May be involved in light-signal transduction and calcium homeostasis via the regulation of calcium influx into cells. This is Glutamate receptor 2.3 (GLR2.3) from Arabidopsis thaliana (Mouse-ear cress).